A 333-amino-acid polypeptide reads, in one-letter code: Prenyltransferase stbC (333 aa).

The next 8 membrane-spanning stretches (helical) occupy residues 74–94, 125–145, 147–164, 173–193, 201–221, 247–267, 272–292, and 304–324; these read VAFQAVLYIGWTFFMRGAGCA, ANIFGFAMVALAFACISPLPA, CQRLGLMTTVLSIIYPFC, VILGMTLAINFILAAYGAGLP, VPTICVTTAITLLVVFYDVVY, ILLTSITLVIAGLIATTGVLV, YFFVFSVAGLLAALLAMIGGI, and SGWFYALAIFNLLGGYLIEYL.

It belongs to the UbiA prenyltransferase family.

Its subcellular location is the membrane. It carries out the reaction orsellinate + (2E,6E)-farnesyl diphosphate = ilicicolinate B + diphosphate. The protein operates within secondary metabolite biosynthesis; terpenoid biosynthesis. In terms of biological role, prenyltransferase; part of the cluster that mediates the biosynthesis of LL-Z1272-beta, also known as ilicicolin B, a prenylated aryl-aldehyde produced by several fungi and that serves as a key pathway intermediate for many fungal meroterpenoids. The first step in the pathway is performed by the non-reducing polyketide synthase stbA that produces orsellinic acid by condensing acetyl-CoA with 3 malonyl-CoA units. The prenyltransferase stbC then prenylates orsenilic acid into grifolic acid. Finally, grifolic acid is reduced to ilicicolin B by the NRPS-like protein stbB. This is Prenyltransferase stbC from Stachybotrys bisbyi (Hyalostachybotrys bisbyi).